We begin with the raw amino-acid sequence, 317 residues long: Beta-ketoacyl-[acyl-carrier-protein] synthase III (317 aa).

Residues C112 and H244 contribute to the active site. Positions 245 to 249 (QANIR) are ACP-binding. The active site involves N274.

It belongs to the thiolase-like superfamily. FabH family. Homodimer.

The protein resides in the cytoplasm. It catalyses the reaction malonyl-[ACP] + acetyl-CoA + H(+) = 3-oxobutanoyl-[ACP] + CO2 + CoA. Its pathway is lipid metabolism; fatty acid biosynthesis. Its function is as follows. Catalyzes the condensation reaction of fatty acid synthesis by the addition to an acyl acceptor of two carbons from malonyl-ACP. Catalyzes the first condensation reaction which initiates fatty acid synthesis and may therefore play a role in governing the total rate of fatty acid production. Possesses both acetoacetyl-ACP synthase and acetyl transacylase activities. Its substrate specificity determines the biosynthesis of branched-chain and/or straight-chain of fatty acids. This chain is Beta-ketoacyl-[acyl-carrier-protein] synthase III, found in Rickettsia massiliae (strain Mtu5).